A 106-amino-acid polypeptide reads, in one-letter code: Phosphoribosyl-ATP pyrophosphatase (106 aa).

It belongs to the PRA-PH family.

The protein localises to the cytoplasm. The enzyme catalyses 1-(5-phospho-beta-D-ribosyl)-ATP + H2O = 1-(5-phospho-beta-D-ribosyl)-5'-AMP + diphosphate + H(+). Its pathway is amino-acid biosynthesis; L-histidine biosynthesis; L-histidine from 5-phospho-alpha-D-ribose 1-diphosphate: step 2/9. This chain is Phosphoribosyl-ATP pyrophosphatase, found in Lactiplantibacillus plantarum (strain ATCC BAA-793 / NCIMB 8826 / WCFS1) (Lactobacillus plantarum).